Consider the following 70-residue polypeptide: Ribosome modulation factor (70 aa).

It belongs to the ribosome modulation factor family.

It is found in the cytoplasm. Its function is as follows. During stationary phase, converts 70S ribosomes to an inactive dimeric form (100S ribosomes). The protein is Ribosome modulation factor of Marinobacter adhaerens (strain DSM 23420 / HP15).